The sequence spans 740 residues: Alpha-1,6-mannosylglycoprotein 6-beta-N-acetylglucosaminyltransferase A (740 aa).

Residues 1–13 are Cytoplasmic-facing; the sequence is MAFFSPWKLSSQK. The chain crosses the membrane as a helical; Signal-anchor for type II membrane protein span at residues 14 to 30; that stretch reads LGFFLVTFGFIWGMMLL. The Lumenal portion of the chain corresponds to 31–740; the sequence is HFTIQQRTQP…GQVALCKDCL (710 aa). N-linked (GlcNAc...) asparagine glycans are attached at residues N109, N114, and N117. Intrachain disulfides connect C144–C182, C155–C195, C171–C337, C371–C625, C648–C723, C652–C725, C659–C712, C680–C701, and C736–C739. The segment at 212–740 is sufficient for catalytic activity; that stretch reads NSLAEIRTDF…GQVALCKDCL (529 aa). N-linked (GlcNAc...) asparagine glycosylation occurs at N333. 377–378 provides a ligand contact to substrate; the sequence is DS. N-linked (GlcNAc...) asparagine glycosylation is found at N432 and N446. E525 contacts UDP-N-acetyl-alpha-D-glucosamine. A substrate-binding site is contributed by K553.

It belongs to the glycosyltransferase 18 family. In terms of processing, N-glycosylated. A secreted form is released from the membrane after cleavage by gamma-secretase. Detected in kidney (at protein level). Detected in kidney.

The protein localises to the golgi apparatus membrane. Its subcellular location is the secreted. It catalyses the reaction N(4)-{beta-D-GlcNAc-(1-&gt;2)-[beta-D-GlcNAc-(1-&gt;4)]-alpha-D-Man-(1-&gt;3)-[beta-D-GlcNAc-(1-&gt;2)-alpha-D-Man-(1-&gt;6)]-beta-D-Man-(1-&gt;4)-beta-D-GlcNAc-(1-&gt;4)-beta-D-GlcNAc}-L-asparaginyl-[protein] + UDP-N-acetyl-alpha-D-glucosamine = N(4)-{beta-D-GlcNAc-(1-&gt;2)-[beta-D-GlcNAc-(1-&gt;4)]-alpha-D-Man-(1-&gt;3)-[beta-D-GlcNAc-(1-&gt;2)-[beta-D-GlcNAc-(1-&gt;6)]-alpha-D-Man-(1-&gt;6)]-beta-D-Man-(1-&gt;4)-beta-D-GlcNAc-(1-&gt;4)-beta-D-GlcNAc}-L-asparaginyl-[protein] + UDP + H(+). Its pathway is protein modification; protein glycosylation. In terms of biological role, catalyzes the addition of N-acetylglucosamine (GlcNAc) in beta 1-6 linkage to the alpha-linked mannose of biantennary N-linked oligosaccharides. Catalyzes an important step in the biosynthesis of branched, complex-type N-glycans, such as those found on EGFR, TGFR (TGF-beta receptor) and CDH2. Via its role in the biosynthesis of complex N-glycans, plays an important role in the activation of cellular signaling pathways, reorganization of the actin cytoskeleton, cell-cell adhesion and cell migration. MGAT5-dependent EGFR N-glycosylation enhances the interaction between EGFR and LGALS3 and thereby prevents rapid EGFR endocytosis and prolongs EGFR signaling. Required for efficient interaction between TGFB1 and its receptor. Enhances activation of intracellular signaling pathways by several types of growth factors, including FGF2, PDGF, IGF, TGFB1 and EGF. MGAT5-dependent CDH2 N-glycosylation inhibits CDH2-mediated homotypic cell-cell adhesion and contributes to the regulation of downstream signaling pathways. Promotes cell migration. Contributes to the regulation of the inflammatory response. MGAT5-dependent TCR N-glycosylation enhances the interaction between TCR and LGALS3, limits agonist-induced TCR clustering, and thereby dampens TCR-mediated responses to antigens. Required for normal leukocyte evasation and accumulation at sites of inflammation. Inhibits attachment of monocytes to the vascular endothelium and subsequent monocyte diapedesis. Functionally, promotes proliferation of umbilical vein endothelial cells and angiogenesis, at least in part by promoting the release of the growth factor FGF2 from the extracellular matrix. The protein is Alpha-1,6-mannosylglycoprotein 6-beta-N-acetylglucosaminyltransferase A (Mgat5) of Rattus norvegicus (Rat).